The chain runs to 318 residues: Olfactory receptor 52D1 (318 aa).

Over M1 to F28 the chain is Extracellular. Residue N5 is glycosylated (N-linked (GlcNAc...) asparagine). The chain crosses the membrane as a helical span at residues W29–I49. Residues L50–A57 lie on the Cytoplasmic side of the membrane. A helical membrane pass occupies residues L58–S78. The Extracellular segment spans residues T79 to A102. Cysteines 100 and 192 form a disulfide. A helical transmembrane segment spans residues Q103–F123. Residues D124–A142 are Cytoplasmic-facing. The helical transmembrane segment at V143–I163 threads the bilayer. Residues F164–I199 lie on the Extracellular side of the membrane. A helical membrane pass occupies residues V200–S220. At Y221–A240 the chain is on the cytoplasmic side. A helical transmembrane segment spans residues L241–S261. Residues F262 to H277 are Extracellular-facing. Residues I278–A298 traverse the membrane as a helical segment. Residues R299–I318 lie on the Cytoplasmic side of the membrane.

This sequence belongs to the G-protein coupled receptor 1 family.

The protein localises to the cell membrane. In terms of biological role, odorant receptor. This is Olfactory receptor 52D1 (OR52D1) from Homo sapiens (Human).